Here is a 440-residue protein sequence, read N- to C-terminus: Proline--tRNA ligase (440 aa).

Belongs to the class-II aminoacyl-tRNA synthetase family. ProS type 2 subfamily. As to quaternary structure, homodimer.

Its subcellular location is the cytoplasm. It carries out the reaction tRNA(Pro) + L-proline + ATP = L-prolyl-tRNA(Pro) + AMP + diphosphate. In terms of biological role, catalyzes the attachment of proline to tRNA(Pro) in a two-step reaction: proline is first activated by ATP to form Pro-AMP and then transferred to the acceptor end of tRNA(Pro). The protein is Proline--tRNA ligase of Rhizobium leguminosarum bv. trifolii (strain WSM2304).